We begin with the raw amino-acid sequence, 705 residues long: Polyribonucleotide nucleotidyltransferase (705 aa).

The Mg(2+) site is built by aspartate 487 and aspartate 493. Positions 554–613 (PKILTMSINPDKIRDVIGPSGKQINKIIEDTGVKIDIEQDGTIFISSTDESMNQKAKKII) constitute a KH domain. One can recognise an S1 motif domain in the interval 623–691 (GQLYLGKVKR…KQGRVNLSRK (69 aa)).

The protein belongs to the polyribonucleotide nucleotidyltransferase family. The cofactor is Mg(2+).

The protein resides in the cytoplasm. It catalyses the reaction RNA(n+1) + phosphate = RNA(n) + a ribonucleoside 5'-diphosphate. In terms of biological role, involved in mRNA degradation. Catalyzes the phosphorolysis of single-stranded polyribonucleotides processively in the 3'- to 5'-direction. The sequence is that of Polyribonucleotide nucleotidyltransferase from Bacillus licheniformis (strain ATCC 14580 / DSM 13 / JCM 2505 / CCUG 7422 / NBRC 12200 / NCIMB 9375 / NCTC 10341 / NRRL NRS-1264 / Gibson 46).